The primary structure comprises 256 residues: GDSL esterase/lipase CPRD49 (256 aa).

The signal sequence occupies residues 1–27 (MVGPARPQIVLFGSSIVQMSFGHGGWG). Residue Ser15 is the Nucleophile of the active site. Asn49 and Asn79 each carry an N-linked (GlcNAc...) asparagine glycan. The active site involves His213. Asn243 carries an N-linked (GlcNAc...) asparagine glycan.

The protein belongs to the 'GDSL' lipolytic enzyme family. As to expression, specifically expressed in anthers (stages 8-12).

Its subcellular location is the secreted. The protein is GDSL esterase/lipase CPRD49 (CPRD49) of Arabidopsis thaliana (Mouse-ear cress).